Consider the following 338-residue polypeptide: Histone acetyltransferase SAS2 (338 aa).

Residues 1–15 (MARSLSQSLTATTQK) are compositionally biased toward polar residues. Positions 1–31 (MARSLSQSLTATTQKLKGKKNGGKGKNKPSA) are disordered. Over residues 16-31 (LKGKKNGGKGKNKPSA) the composition is skewed to basic residues. Residues 45-338 (LNERNIRQIQ…LKDEYLLIDD (294 aa)) form the MYST-type HAT domain. Residues 100 to 126 (LFVCEYCFKYTDDQTRFVGHVASCPFQ) form a C2HC MYST-type zinc finger. K168 carries the N6-acetyllysine; by autocatalysis modification. Acetyl-CoA-binding positions include 209–211 (ILI) and 216–222 (QRRGLGL). The active-site Proton donor/acceptor is E242. Residues S246 and K323 each coordinate acetyl-CoA.

Belongs to the MYST (SAS/MOZ) family. Interacts with CAC1. Component of the SAS complex, at least composed of SAS2, SAS4 and SAS5. These three proteins constitute the core of the complex and are sufficient to acetylate histones. SAS4 is essential for HAT activity of the complex, while SAS5 is required for maxiaml HAT activity. In terms of processing, autoacetylation at Lys-168 is required for proper function.

Its subcellular location is the cytoplasm. It is found in the nucleus. The enzyme catalyses L-lysyl-[protein] + acetyl-CoA = N(6)-acetyl-L-lysyl-[protein] + CoA + H(+). In terms of biological role, histone acetyltransferase (HAT) subunit of the SAS complex, a multiprotein complex that acetylates 'Lys-16' of histone H4 and 'Lys-14' of histone H3. The SAS complex is however unable to acetylate nucleosomal histones. The complex is involved in transcriptional silencing at telomeres and at HML locus. Also involved in rDNA silencing and G0 control. The protein is Histone acetyltransferase SAS2 (SAS2) of Saccharomyces cerevisiae (strain ATCC 204508 / S288c) (Baker's yeast).